Consider the following 156-residue polypeptide: Flagellar assembly factor FliW (156 aa).

This sequence belongs to the FliW family. Interacts with translational regulator CsrA and flagellin(s).

The protein resides in the cytoplasm. Acts as an anti-CsrA protein, binds CsrA and prevents it from repressing translation of its target genes, one of which is flagellin. Binds to flagellin and participates in the assembly of the flagellum. The protein is Flagellar assembly factor FliW of Lachnoclostridium phytofermentans (strain ATCC 700394 / DSM 18823 / ISDg) (Clostridium phytofermentans).